Reading from the N-terminus, the 333-residue chain is MVREKVKVSTRTLQWKCVESRRDSKRLYYGRFILSPLMKGQADTIGIAMRRALLGEMEGTCITRAKSENIPHDYSNIVGIQESVHEILMNLQEIVLRSNLYGTCNALICVQGPGYITARDIILPPSVEIMDNTQHIATLTEPIDLCIGLQIERNRGYSLKMPNPFEDGSYPIDALFMPVQNANHSIHSYGTGNENQEILFLEIWTNGNLTPKEALHEASRNLINLFIPFLHVEEETFYLENNEDKVTLPLFPFHNRLVKLRKKKKELVFQYIFIDQLELPPRIYNCLKKSNIHTLLDLLNNSQEDLIKIEHFHIEDVKKILDILEKNRKFISN.

The tract at residues 1–233 (MVREKVKVST…NLFIPFLHVE (233 aa)) is alpha N-terminal domain (alpha-NTD). The tract at residues 267–333 (LVFQYIFIDQ…LEKNRKFISN (67 aa)) is alpha C-terminal domain (alpha-CTD).

It belongs to the RNA polymerase alpha chain family. As to quaternary structure, in plastids the minimal PEP RNA polymerase catalytic core is composed of four subunits: alpha, beta, beta', and beta''. When a (nuclear-encoded) sigma factor is associated with the core the holoenzyme is formed, which can initiate transcription.

Its subcellular location is the plastid. It localises to the chloroplast. It carries out the reaction RNA(n) + a ribonucleoside 5'-triphosphate = RNA(n+1) + diphosphate. Functionally, DNA-dependent RNA polymerase catalyzes the transcription of DNA into RNA using the four ribonucleoside triphosphates as substrates. This is DNA-directed RNA polymerase subunit alpha from Aethionema grandiflorum (Persian stone-cress).